A 398-amino-acid polypeptide reads, in one-letter code: DNA polymerase IV (398 aa).

The region spanning 5–187 is the UmuC domain; that stretch reads IFLVDMNAFF…LSIKSMHGVG (183 aa). Asp9 and Asp105 together coordinate Mg(2+). Glu106 is an active-site residue.

This sequence belongs to the DNA polymerase type-Y family. Monomer. The cofactor is Mg(2+).

It is found in the cytoplasm. It catalyses the reaction DNA(n) + a 2'-deoxyribonucleoside 5'-triphosphate = DNA(n+1) + diphosphate. Its function is as follows. Poorly processive, error-prone DNA polymerase involved in untargeted mutagenesis. Copies undamaged DNA at stalled replication forks, which arise in vivo from mismatched or misaligned primer ends. These misaligned primers can be extended by PolIV. Exhibits no 3'-5' exonuclease (proofreading) activity. May be involved in translesional synthesis, in conjunction with the beta clamp from PolIII. The protein is DNA polymerase IV of Alkaliphilus oremlandii (strain OhILAs) (Clostridium oremlandii (strain OhILAs)).